A 294-amino-acid chain; its full sequence is Glyceraldehyde-3-phosphate dehydrogenase (294 aa).

Residues Asp-19, Arg-63, and Thr-105 each contribute to the NAD(+) site. Residues 134-136 (SCT) and Thr-165 each bind D-glyceraldehyde 3-phosphate. Cys-135 functions as the Nucleophile in the catalytic mechanism. Positions 169 to 188 (KTVDGPSHKDWRGGRGASQN) are disordered. D-glyceraldehyde 3-phosphate is bound by residues 194–195 (TG) and Arg-217.

It belongs to the glyceraldehyde-3-phosphate dehydrogenase family. In terms of assembly, homotetramer.

The protein resides in the cytoplasm. The catalysed reaction is D-glyceraldehyde 3-phosphate + phosphate + NAD(+) = (2R)-3-phospho-glyceroyl phosphate + NADH + H(+). The protein operates within carbohydrate degradation; glycolysis; pyruvate from D-glyceraldehyde 3-phosphate: step 1/5. In terms of biological role, catalyzes the oxidative phosphorylation of glyceraldehyde 3-phosphate (G3P) to 1,3-bisphosphoglycerate (BPG) using the cofactor NAD. The first reaction step involves the formation of a hemiacetal intermediate between G3P and a cysteine residue, and this hemiacetal intermediate is then oxidized to a thioester, with concomitant reduction of NAD to NADH. The reduced NADH is then exchanged with the second NAD, and the thioester is attacked by a nucleophilic inorganic phosphate to produce BPG. This is Glyceraldehyde-3-phosphate dehydrogenase (gap) from Citrobacter freundii.